A 200-amino-acid polypeptide reads, in one-letter code: Glycosyl hydrolase family 19 domain-containing protein HI_1415 (200 aa).

Belongs to the glycosyl hydrolase 19 family.

The polypeptide is Glycosyl hydrolase family 19 domain-containing protein HI_1415 (Haemophilus influenzae (strain ATCC 51907 / DSM 11121 / KW20 / Rd)).